The following is a 442-amino-acid chain: uncharacterized protein (442 aa).

The 238-residue stretch at 1 to 238 (MKAEGLSGGY…QSIKAVYDTD (238 aa)) folds into the ABC transporter domain. 33–40 (GPNGSGKT) provides a ligand contact to ATP.

This sequence belongs to the ABC transporter superfamily. The complex is composed of two ATP-binding proteins (YvrA), two transmembrane proteins (YvrB) and a solute-binding protein (YvrC).

Functionally, probably part of an ABC transporter complex. Probably responsible for energy coupling to the transport system. This is an uncharacterized protein from Bacillus subtilis (strain 168).